Here is a 345-residue protein sequence, read N- to C-terminus: Methionine import ATP-binding protein MetN (345 aa).

Residues 2–241 enclose the ABC transporter domain; the sequence is IKLKNISKIF…PKTELAQEFI (240 aa). 38–45 contributes to the ATP binding site; it reads GASGAGKS.

This sequence belongs to the ABC transporter superfamily. Methionine importer (TC 3.A.1.24) family. In terms of assembly, the complex is composed of two ATP-binding proteins (MetN), two transmembrane proteins (MetI) and a solute-binding protein (MetQ).

Its subcellular location is the cell inner membrane. The catalysed reaction is L-methionine(out) + ATP + H2O = L-methionine(in) + ADP + phosphate + H(+). It catalyses the reaction D-methionine(out) + ATP + H2O = D-methionine(in) + ADP + phosphate + H(+). Its function is as follows. Part of the ABC transporter complex MetNIQ involved in methionine import. Responsible for energy coupling to the transport system. This chain is Methionine import ATP-binding protein MetN, found in Mannheimia succiniciproducens (strain KCTC 0769BP / MBEL55E).